The following is a 123-amino-acid chain: Ig heavy chain V region HPCG13 (123 aa).

Residues 1-114 (EVKLVESGGG…GSYWYFDVWG (114 aa)) enclose the Ig-like domain.

The sequence is that of Ig heavy chain V region HPCG13 from Mus musculus (Mouse).